The chain runs to 248 residues: Anamorsin homolog (248 aa).

The tract at residues 4–130 is N-terminal SAM-like domain; it reads FKGLQKSLYI…ETGSSARLSF (127 aa). Residues 131 to 161 are linker; that stretch reads AKKSPSMNVWKISGDDEELIDEEELLDEEDK. Residues cysteine 172, cysteine 181, cysteine 184, and cysteine 186 each contribute to the [2Fe-2S] cluster site. The tract at residues 172-186 is fe-S binding site A; that stretch reads CSTTGKRKACKNCSC. The [4Fe-4S] cluster site is built by cysteine 209, cysteine 212, cysteine 220, and cysteine 223. Short sequence motifs (cx2C motif) lie at residues 209-212 and 220-223; these read CGNC and CSTC. The fe-S binding site B stretch occupies residues 209-223; it reads CGNCYLGDAFRCSTC.

This sequence belongs to the anamorsin family. As to quaternary structure, monomer. [2Fe-2S] cluster is required as a cofactor. The cofactor is [4Fe-4S] cluster.

Its subcellular location is the cytoplasm. It localises to the mitochondrion intermembrane space. In terms of biological role, component of the cytosolic iron-sulfur (Fe-S) protein assembly (CIA) machinery. Required for the maturation of extramitochondrial Fe-S proteins. Part of an electron transfer chain functioning in an early step of cytosolic Fe-S biogenesis, facilitating the de novo assembly of a [4Fe-4S] cluster on the cytosolic Fe-S scaffold complex. Electrons are transferred from NADPH via a FAD- and FMN-containing diflavin oxidoreductase. Together with the diflavin oxidoreductase, also required for the assembly of the diferric tyrosyl radical cofactor of ribonucleotide reductase (RNR), probably by providing electrons for reduction during radical cofactor maturation in the catalytic small subunit. The chain is Anamorsin homolog from Drosophila mojavensis (Fruit fly).